A 638-amino-acid polypeptide reads, in one-letter code: Methionine--tRNA ligase (638 aa).

A 'HIGH' region motif is present at residues 12-22 (YYPSDKLHIGH). 4 residues coordinate Zn(2+): C127, C130, C144, and C147. Residues 296 to 300 (KMSKS) carry the 'KMSKS' region motif. ATP is bound at residue K299. One can recognise a tRNA-binding domain in the interval 538 to 638 (DFSKVQLRVA…KDIESGSKIS (101 aa)).

This sequence belongs to the class-I aminoacyl-tRNA synthetase family. MetG type 2A subfamily. In terms of assembly, homodimer. Requires Zn(2+) as cofactor.

It is found in the cytoplasm. The enzyme catalyses tRNA(Met) + L-methionine + ATP = L-methionyl-tRNA(Met) + AMP + diphosphate. Its function is as follows. Is required not only for elongation of protein synthesis but also for the initiation of all mRNA translation through initiator tRNA(fMet) aminoacylation. In Caldanaerobacter subterraneus subsp. tengcongensis (strain DSM 15242 / JCM 11007 / NBRC 100824 / MB4) (Thermoanaerobacter tengcongensis), this protein is Methionine--tRNA ligase (metG).